Reading from the N-terminus, the 185-residue chain is Ribosome-recycling factor (185 aa).

It belongs to the RRF family.

Its subcellular location is the cytoplasm. Functionally, responsible for the release of ribosomes from messenger RNA at the termination of protein biosynthesis. May increase the efficiency of translation by recycling ribosomes from one round of translation to another. This Lacticaseibacillus casei (strain BL23) (Lactobacillus casei) protein is Ribosome-recycling factor.